A 477-amino-acid chain; its full sequence is Minor capsid protein (477 aa).

The protein belongs to the closteroviridae minor capsid protein family.

It localises to the virion. In terms of biological role, minor capsid protein that encapsidates the 5'-terminal portion of the viral genome. The chain is Minor capsid protein from Vitis vinifera (Grape).